Here is a 227-residue protein sequence, read N- to C-terminus: Homeobox protein HD-10 (227 aa).

Residues 30 to 89 (FVKHRKRTTKAQLKVLEETFETNIRPDANMRKKLGEQLGMTPRSVQVWFQNRRAKIKKLT) constitute a DNA-binding region (homeobox). Residues 88–115 (LTQKKMMQQENTDNTKGPDAAHGSSSPK) form a disordered region. Residues 92–102 (KMMQQENTDNT) are compositionally biased toward polar residues.

Its subcellular location is the nucleus. The protein is Homeobox protein HD-10 (HD-10) of Encephalitozoon cuniculi (strain GB-M1) (Microsporidian parasite).